We begin with the raw amino-acid sequence, 387 residues long: Phosphoglycerate kinase (387 aa).

Substrate contacts are provided by residues D21–N23, R36, H59–R62, R113, and R146. ATP-binding positions include K197, E314, and G340–T343.

It belongs to the phosphoglycerate kinase family. Monomer.

It localises to the cytoplasm. It catalyses the reaction (2R)-3-phosphoglycerate + ATP = (2R)-3-phospho-glyceroyl phosphate + ADP. Its pathway is carbohydrate degradation; glycolysis; pyruvate from D-glyceraldehyde 3-phosphate: step 2/5. The sequence is that of Phosphoglycerate kinase from Pectobacterium carotovorum subsp. carotovorum (strain PC1).